The chain runs to 463 residues: MATLTNLEPLATGTVILKTTRGDIQIELWCKEVPKACRNFIQLCLEGYYDGTIVHRVVPEFLIQGGDPTGTGMGGESIYGEPFAVETHPRLRFIRRGLVGMACTENEGNNSQFFITLGPTPEWNGKQTLFGRVVGDTIYNVVRISELELDANQRPVFPPKIISTEVIDNYFTDIKPRSTKEEREKIANELAHQEKQKERNKLLKSGRRNKAVLSFGDEVDMPIVKKPLRQKTPVSRSSDTTTELSKDLISSSSSIHSTYSSAQTGLTSAKVSSDEYARQVDTLDTKLNSSSKSKVQEEISRLKSELRDLEKSGGSSNSKPVVVRPKKRNILTEELEKYKKSKKVVLGKRKNLENDEESTLRALSSFQSKIRNAEDEDVMDSQYGSKIEDTPCSLHNVPGCFSCFDRLGEKNITETNSNWFAHRLVAENDPTRRTEELRIQRAEELKDVPSARPKKLLMKRDII.

The 156-residue stretch at 11–166 (ATGTVILKTT…FPPKIISTEV (156 aa)) folds into the PPIase cyclophilin-type domain. Residues 224 to 275 (VKKPLRQKTPVSRSSDTTTELSKDLISSSSSIHSTYSSAQTGLTSAKVSSDE) are disordered. Residues 232 to 243 (TPVSRSSDTTTE) show a composition bias toward polar residues. Low complexity predominate over residues 250–261 (SSSSSIHSTYSS). Over residues 262–271 (AQTGLTSAKV) the composition is skewed to polar residues.

This sequence belongs to the cyclophilin-type PPIase family. CWC27 subfamily. Belongs to the 40S cdc5-associated complex (or cwf complex), a spliceosome sub-complex reminiscent of a late-stage spliceosome composed of the U2, U5 and U6 snRNAs and at least brr2, cdc5, cwf2/prp3, cwf3/syf1, cwf4/syf3, cwf5/ecm2, spp42/cwf6, cwf7/spf27, cwf8, cwf9, cwf10, cwf11, cwf12, prp45/cwf13, cwf14, cwf15, cwf16, cwf17, cwf18, cwf19, cwf20, cwf21, cwf22, cwf23, cwf24, cwf25, cwf26, cyp7/cwf27, cwf28, cwf29/ist3, lea1, msl1, prp5/cwf1, prp10, prp12/sap130, prp17, prp22, sap61, sap62, sap114, sap145, slu7, smb1, smd1, smd3, smf1, smg1 and syf2.

It localises to the cytoplasm. It is found in the nucleus. The catalysed reaction is [protein]-peptidylproline (omega=180) = [protein]-peptidylproline (omega=0). Functionally, PPIases accelerate the folding of proteins. Catalyzes the cis-trans isomerization of proline imidic peptide bonds in oligopeptides. Involved in pre-mRNA splicing. This chain is Peptidylprolyl isomerase cyp7 (cyp7), found in Schizosaccharomyces pombe (strain 972 / ATCC 24843) (Fission yeast).